Consider the following 490-residue polypeptide: Cysteine--tRNA ligase (490 aa).

A Zn(2+)-binding site is contributed by cysteine 36. The 'HIGH' region motif lies at 38 to 48 (VTVYDYSHIGH). The Zn(2+) site is built by cysteine 216, histidine 241, and glutamate 245. The 'KMSKS' region signature appears at 278–282 (KMSKS). An ATP-binding site is contributed by lysine 281.

Belongs to the class-I aminoacyl-tRNA synthetase family. Monomer. Zn(2+) serves as cofactor.

It localises to the cytoplasm. It catalyses the reaction tRNA(Cys) + L-cysteine + ATP = L-cysteinyl-tRNA(Cys) + AMP + diphosphate. The sequence is that of Cysteine--tRNA ligase from Magnetococcus marinus (strain ATCC BAA-1437 / JCM 17883 / MC-1).